A 149-amino-acid chain; its full sequence is uncharacterized protein (149 aa).

This is an uncharacterized protein from Aquifex aeolicus (strain VF5).